A 390-amino-acid chain; its full sequence is S-adenosylmethionine:tRNA ribosyltransferase-isomerase (390 aa).

Positions 1–22 (MTQPLSQDQHDSSSNMPTDNAE) are disordered.

Belongs to the QueA family. Monomer.

It localises to the cytoplasm. It carries out the reaction 7-aminomethyl-7-carbaguanosine(34) in tRNA + S-adenosyl-L-methionine = epoxyqueuosine(34) in tRNA + adenine + L-methionine + 2 H(+). It functions in the pathway tRNA modification; tRNA-queuosine biosynthesis. Transfers and isomerizes the ribose moiety from AdoMet to the 7-aminomethyl group of 7-deazaguanine (preQ1-tRNA) to give epoxyqueuosine (oQ-tRNA). The sequence is that of S-adenosylmethionine:tRNA ribosyltransferase-isomerase from Psychrobacter sp. (strain PRwf-1).